The following is a 365-amino-acid chain: tRNA(Met) cytidine acetate ligase (365 aa).

ATP contacts are provided by residues 7-20, G96, N152, and R175; that span reads IAEF…HKYL.

This sequence belongs to the TmcAL family.

It localises to the cytoplasm. The enzyme catalyses cytidine(34) in elongator tRNA(Met) + acetate + ATP = N(4)-acetylcytidine(34) in elongator tRNA(Met) + AMP + diphosphate. In terms of biological role, catalyzes the formation of N(4)-acetylcytidine (ac(4)C) at the wobble position of elongator tRNA(Met), using acetate and ATP as substrates. First activates an acetate ion to form acetyladenylate (Ac-AMP) and then transfers the acetyl group to tRNA to form ac(4)C34. The polypeptide is tRNA(Met) cytidine acetate ligase (Streptococcus pneumoniae (strain JJA)).